The following is a 509-amino-acid chain: Heat shock 70 kDa protein 14 (509 aa).

Belongs to the heat shock protein 70 family. In terms of assembly, component of ribosome-associated complex (RAC), a heterodimer composed of Hsp70/DnaK-type chaperone HSPA14 and Hsp40/DnaJ-type chaperone DNAJC2.

It localises to the cytoplasm. Its subcellular location is the cytosol. In terms of biological role, component of the ribosome-associated complex (RAC), a complex involved in folding or maintaining nascent polypeptides in a folding-competent state. In the RAC complex, binds to the nascent polypeptide chain, while DNAJC2 stimulates its ATPase activity. The chain is Heat shock 70 kDa protein 14 (HSPA14) from Bos taurus (Bovine).